Here is a 268-residue protein sequence, read N- to C-terminus: Tryptophan synthase alpha chain (268 aa).

Active-site proton acceptor residues include E47 and D58.

This sequence belongs to the TrpA family. In terms of assembly, tetramer of two alpha and two beta chains.

It is found in the plastid. Its subcellular location is the chloroplast. The catalysed reaction is (1S,2R)-1-C-(indol-3-yl)glycerol 3-phosphate + L-serine = D-glyceraldehyde 3-phosphate + L-tryptophan + H2O. The protein operates within amino-acid biosynthesis; L-tryptophan biosynthesis; L-tryptophan from chorismate: step 5/5. The alpha subunit is responsible for the aldol cleavage of indoleglycerol phosphate to indole and glyceraldehyde 3-phosphate. The protein is Tryptophan synthase alpha chain of Gracilaria tenuistipitata var. liui (Red alga).